A 340-amino-acid chain; its full sequence is Pseudaminic acid synthase (340 aa).

In terms of domain architecture, AFP-like spans 281-337; that stretch reads SLFVIKDIQKGEALTENNIKALRPNLGLHPKFYKEILGQKASKFLKANTPLSADDIE.

The protein belongs to the pseudaminic acid synthase family. The cofactor is a divalent metal cation.

It catalyses the reaction 2,4-diacetamido-2,4,6-trideoxy-beta-L-altrose + phosphoenolpyruvate + H2O = pseudaminate + phosphate. In terms of biological role, catalyzes the fifth step in the biosynthesis of pseudaminic acid, a sialic-acid-like sugar that is used to modify flagellin. Catalyzes the condensation of phosphoenolpyruvate with 2,4-diacetamido-2,4,6-trideoxy-beta-l-altropyranose, forming pseudaminic acid. This is Pseudaminic acid synthase (pseI) from Helicobacter pylori (strain ATCC 700392 / 26695) (Campylobacter pylori).